Reading from the N-terminus, the 37-residue chain is Cytochrome b6-f complex subunit 5 (37 aa).

A helical membrane pass occupies residues 5–25 (LLSGIVLGLIPITLAGLFVTA).

The protein belongs to the PetG family. The 4 large subunits of the cytochrome b6-f complex are cytochrome b6, subunit IV (17 kDa polypeptide, PetD), cytochrome f and the Rieske protein, while the 4 small subunits are PetG, PetL, PetM and PetN. The complex functions as a dimer.

The protein localises to the plastid. It localises to the chloroplast thylakoid membrane. Its function is as follows. Component of the cytochrome b6-f complex, which mediates electron transfer between photosystem II (PSII) and photosystem I (PSI), cyclic electron flow around PSI, and state transitions. PetG is required for either the stability or assembly of the cytochrome b6-f complex. This is Cytochrome b6-f complex subunit 5 from Chaetosphaeridium globosum (Charophycean green alga).